The primary structure comprises 363 residues: Jasmonate-induced oxygenase 3 (363 aa).

The Fe2OG dioxygenase domain maps to 210-312; sequence ESGGCLRVNY…RLSLAFFYNP (103 aa). Arg-216 lines the jasmonate pocket. 2-oxoglutarate is bound by residues Asn-218 and Tyr-220. The Fe cation site is built by His-235, Asp-237, and His-293. Residues Arg-303 and Ser-305 each coordinate 2-oxoglutarate. 2 residues coordinate jasmonate: Arg-342 and Arg-346.

The protein belongs to the iron/ascorbate-dependent oxidoreductase family. The cofactor is L-ascorbate. Fe(2+) serves as cofactor.

It carries out the reaction jasmonate + 2-oxoglutarate + O2 = (1R,2R)-12-hydroxyjasmonate + succinate + CO2. 2-oxoglutarate-dependent dioxygenase involved in the oxidation of jasmonate (JA), a stress-induced phytohormone synthesized in response to attack by pathogens and herbivores, which triggers the activation of defense responses via the JA-mediated signaling pathway. Converts JA to 12-hydroxyjasmonate (12OH-JA), an inactive form of JA. Is specific to free JA, and cannot oxidize the bioactive form jasmonoyl-L-isoleucine (JA-Ile) or other JA-amino acid conjugates. Prevents over-accumulation of JA and indirectly its bioactive form JA-Ile under stress response. Acts as a negative regulator of JA-mediated defense signaling, by contributing to 12OH-JA accumulation, which represses JA defense responses upon infection by the fungal pathogen Botrytis cinerea. Acts as a negative regulator of JA-mediated defense responses upon infestation by the herbivorous caterpillar Mamestra brassicae. The protein is Jasmonate-induced oxygenase 3 of Arabidopsis thaliana (Mouse-ear cress).